Reading from the N-terminus, the 619-residue chain is Chaperone protein HscA homolog (619 aa).

Belongs to the heat shock protein 70 family.

Its function is as follows. Chaperone involved in the maturation of iron-sulfur cluster-containing proteins. Has a low intrinsic ATPase activity which is markedly stimulated by HscB. The chain is Chaperone protein HscA homolog from Pseudomonas paraeruginosa (strain DSM 24068 / PA7) (Pseudomonas aeruginosa (strain PA7)).